Consider the following 1168-residue polypeptide: Zinc finger CCHC domain-containing protein 2 (1168 aa).

Disordered regions lie at residues 1-87, 209-242, 561-693, and 932-978; these read MLRM…GGHA, EGSR…CAKL, KRSL…LGTE, and ATSA…SDST. Residues 43 to 66 are compositionally biased toward pro residues; that stretch reads PPPPPPTGLPRGPPPPPPSPPRGL. Residues 67–78 are compositionally biased toward low complexity; sequence EPPVASGPTAGA. Positions 216 to 227 are enriched in acidic residues; it reads EDEPGGDDEQDA. The span at 233–242 shows a compositional bias: gly residues; that stretch reads GPEGGGCAKL. The segment covering 574 to 588 has biased composition (basic and acidic residues); the sequence is PQVEKEKIKKTENRL. Over residues 626–635 the composition is skewed to low complexity; the sequence is SSESYSSPSS. A compositionally biased stretch (basic and acidic residues) spans 636–655; the sequence is PRHDGRESLESEEEKDRDTD. The segment covering 932–949 has biased composition (polar residues); the sequence is ATSAQPASTGISPAQSTV. The span at 951-965 shows a compositional bias: pro residues; the sequence is PAVPTHTPGPAPSPS. The segment covering 966–978 has biased composition (polar residues); the sequence is PALTHSTAQSDST. The segment at 1121 to 1138 adopts a CCHC-type zinc-finger fold; the sequence is VSCYNCGVSGHYAQDCKQ.

The polypeptide is Zinc finger CCHC domain-containing protein 2 (Zcchc2) (Rattus norvegicus (Rat)).